The following is a 200-amino-acid chain: 3-isopropylmalate dehydratase small subunit (200 aa).

This sequence belongs to the LeuD family. LeuD type 1 subfamily. In terms of assembly, heterodimer of LeuC and LeuD.

It carries out the reaction (2R,3S)-3-isopropylmalate = (2S)-2-isopropylmalate. Its pathway is amino-acid biosynthesis; L-leucine biosynthesis; L-leucine from 3-methyl-2-oxobutanoate: step 2/4. Catalyzes the isomerization between 2-isopropylmalate and 3-isopropylmalate, via the formation of 2-isopropylmaleate. This is 3-isopropylmalate dehydratase small subunit from Sodalis glossinidius (strain morsitans).